The primary structure comprises 350 residues: Ion-translocating oxidoreductase complex subunit D (350 aa).

The next 5 membrane-spanning stretches (helical) occupy residues 20–40 (IMML…WFFG), 42–62 (GTLF…AAVL), 68–88 (PIAA…LAVS), 89–109 (IPPL…VIIA), and 123–143 (PAMI…TSWL). The residue at position 187 (threonine 187) is an FMN phosphoryl threonine. A run of 5 helical transmembrane segments spans residues 215-235 (LAGA…VWLL), 244-264 (IPVS…AFAG), 267-287 (LASP…FFIL), 301-321 (LIFG…GGYP), and 322-342 (DGVA…DYYT).

It belongs to the NqrB/RnfD family. The complex is composed of six subunits: RnfA, RnfB, RnfC, RnfD, RnfE and RnfG. Requires FMN as cofactor.

The protein localises to the cell inner membrane. Functionally, part of a membrane-bound complex that couples electron transfer with translocation of ions across the membrane. This Citrobacter koseri (strain ATCC BAA-895 / CDC 4225-83 / SGSC4696) protein is Ion-translocating oxidoreductase complex subunit D.